The primary structure comprises 323 residues: Acetyl-coenzyme A carboxylase carboxyl transferase subunit alpha (323 aa).

Residues 36 to 293 form the CoA carboxyltransferase C-terminal domain; sequence ELELLSAKAQ…KEEVVKNLQI (258 aa).

Belongs to the AccA family. As to quaternary structure, acetyl-CoA carboxylase is a heterohexamer composed of biotin carboxyl carrier protein (AccB), biotin carboxylase (AccC) and two subunits each of ACCase subunit alpha (AccA) and ACCase subunit beta (AccD).

It is found in the cytoplasm. It catalyses the reaction N(6)-carboxybiotinyl-L-lysyl-[protein] + acetyl-CoA = N(6)-biotinyl-L-lysyl-[protein] + malonyl-CoA. It participates in lipid metabolism; malonyl-CoA biosynthesis; malonyl-CoA from acetyl-CoA: step 1/1. Functionally, component of the acetyl coenzyme A carboxylase (ACC) complex. First, biotin carboxylase catalyzes the carboxylation of biotin on its carrier protein (BCCP) and then the CO(2) group is transferred by the carboxyltransferase to acetyl-CoA to form malonyl-CoA. This chain is Acetyl-coenzyme A carboxylase carboxyl transferase subunit alpha, found in Carboxydothermus hydrogenoformans (strain ATCC BAA-161 / DSM 6008 / Z-2901).